Consider the following 217-residue polypeptide: tRNA (guanine-N(7)-)-methyltransferase (217 aa).

S-adenosyl-L-methionine-binding residues include Glu46, Glu71, Asp98, and Asp120. Residue Asp120 is part of the active site. Lys124 contacts substrate. An interaction with RNA region spans residues 126–131 (RHEKRR). Substrate-binding positions include Asp156 and 196 to 199 (TEYE).

The protein belongs to the class I-like SAM-binding methyltransferase superfamily. TrmB family.

The catalysed reaction is guanosine(46) in tRNA + S-adenosyl-L-methionine = N(7)-methylguanosine(46) in tRNA + S-adenosyl-L-homocysteine. The protein operates within tRNA modification; N(7)-methylguanine-tRNA biosynthesis. Its function is as follows. Catalyzes the formation of N(7)-methylguanine at position 46 (m7G46) in tRNA. The chain is tRNA (guanine-N(7)-)-methyltransferase from Lactobacillus gasseri (strain ATCC 33323 / DSM 20243 / BCRC 14619 / CIP 102991 / JCM 1131 / KCTC 3163 / NCIMB 11718 / NCTC 13722 / AM63).